The sequence spans 235 residues: Purine nucleoside phosphorylase DeoD-type (235 aa).

His-4 is a binding site for a purine D-ribonucleoside. Residues Gly-20, Arg-24, Arg-43, and 87–90 contribute to the phosphate site; that span reads RVGT. A purine D-ribonucleoside is bound by residues 179–181 and 203–204; these read EME and SD. The active-site Proton donor is Asp-204.

The protein belongs to the PNP/UDP phosphorylase family. Homohexamer; trimer of homodimers.

The catalysed reaction is a purine D-ribonucleoside + phosphate = a purine nucleobase + alpha-D-ribose 1-phosphate. It catalyses the reaction a purine 2'-deoxy-D-ribonucleoside + phosphate = a purine nucleobase + 2-deoxy-alpha-D-ribose 1-phosphate. Functionally, catalyzes the reversible phosphorolytic breakdown of the N-glycosidic bond in the beta-(deoxy)ribonucleoside molecules, with the formation of the corresponding free purine bases and pentose-1-phosphate. The sequence is that of Purine nucleoside phosphorylase DeoD-type from Clostridium perfringens (strain ATCC 13124 / DSM 756 / JCM 1290 / NCIMB 6125 / NCTC 8237 / Type A).